The chain runs to 261 residues: MTHQTHAYHMVNPSPWPLTGAMSALLLTSGLIMWFHFNSYTLLLLGLLTNLISSYQWWRDIVREGTYQGHHTKIVQKGLRYGMILFIISEVFFFLGFFWAFYHSSLAPTPELGGCWPPTGISPLNPLEVPLLNTSILLASGVSITWAHHSLMEGNRKQMLQALTITIALGLYFTALQAMEYYEASFTISDGVYGSTFFVATGFHGLHVIIGTTFLITCLVRQTLYHFTSNHHFGFEAAAWYWHFVDVVWLFLYVSIYWWGS.

Residues 1-15 are Mitochondrial matrix-facing; sequence MTHQTHAYHMVNPSP. A helical transmembrane segment spans residues 16-34; that stretch reads WPLTGAMSALLLTSGLIMW. The Mitochondrial intermembrane segment spans residues 35–40; that stretch reads FHFNSY. A helical transmembrane segment spans residues 41-66; it reads TLLLLGLLTNLISSYQWWRDIVREGT. Residues 67 to 72 are Mitochondrial matrix-facing; it reads YQGHHT. A helical membrane pass occupies residues 73–105; the sequence is KIVQKGLRYGMILFIISEVFFFLGFFWAFYHSS. At 106–128 the chain is on the mitochondrial intermembrane side; that stretch reads LAPTPELGGCWPPTGISPLNPLE. A helical transmembrane segment spans residues 129–152; that stretch reads VPLLNTSILLASGVSITWAHHSLM. The Mitochondrial matrix segment spans residues 153-155; sequence EGN. The helical transmembrane segment at 156–183 threads the bilayer; the sequence is RKQMLQALTITIALGLYFTALQAMEYYE. Residues 184–190 lie on the Mitochondrial intermembrane side of the membrane; it reads ASFTISD. The chain crosses the membrane as a helical span at residues 191 to 223; that stretch reads GVYGSTFFVATGFHGLHVIIGTTFLITCLVRQT. Topologically, residues 224–232 are mitochondrial matrix; the sequence is LYHFTSNHH. Residues 233 to 256 traverse the membrane as a helical segment; it reads FGFEAAAWYWHFVDVVWLFLYVSI. Topologically, residues 257 to 261 are mitochondrial intermembrane; sequence YWWGS.

The protein belongs to the cytochrome c oxidase subunit 3 family. As to quaternary structure, component of the cytochrome c oxidase (complex IV, CIV), a multisubunit enzyme composed of 14 subunits. The complex is composed of a catalytic core of 3 subunits MT-CO1, MT-CO2 and MT-CO3, encoded in the mitochondrial DNA, and 11 supernumerary subunits COX4I, COX5A, COX5B, COX6A, COX6B, COX6C, COX7A, COX7B, COX7C, COX8 and NDUFA4, which are encoded in the nuclear genome. The complex exists as a monomer or a dimer and forms supercomplexes (SCs) in the inner mitochondrial membrane with NADH-ubiquinone oxidoreductase (complex I, CI) and ubiquinol-cytochrome c oxidoreductase (cytochrome b-c1 complex, complex III, CIII), resulting in different assemblies (supercomplex SCI(1)III(2)IV(1) and megacomplex MCI(2)III(2)IV(2)).

It is found in the mitochondrion inner membrane. The catalysed reaction is 4 Fe(II)-[cytochrome c] + O2 + 8 H(+)(in) = 4 Fe(III)-[cytochrome c] + 2 H2O + 4 H(+)(out). Its function is as follows. Component of the cytochrome c oxidase, the last enzyme in the mitochondrial electron transport chain which drives oxidative phosphorylation. The respiratory chain contains 3 multisubunit complexes succinate dehydrogenase (complex II, CII), ubiquinol-cytochrome c oxidoreductase (cytochrome b-c1 complex, complex III, CIII) and cytochrome c oxidase (complex IV, CIV), that cooperate to transfer electrons derived from NADH and succinate to molecular oxygen, creating an electrochemical gradient over the inner membrane that drives transmembrane transport and the ATP synthase. Cytochrome c oxidase is the component of the respiratory chain that catalyzes the reduction of oxygen to water. Electrons originating from reduced cytochrome c in the intermembrane space (IMS) are transferred via the dinuclear copper A center (CU(A)) of subunit 2 and heme A of subunit 1 to the active site in subunit 1, a binuclear center (BNC) formed by heme A3 and copper B (CU(B)). The BNC reduces molecular oxygen to 2 water molecules using 4 electrons from cytochrome c in the IMS and 4 protons from the mitochondrial matrix. The protein is Cytochrome c oxidase subunit 3 (MT-CO3) of Ornithorhynchus anatinus (Duckbill platypus).